Consider the following 145-residue polypeptide: Prefoldin subunit alpha (145 aa).

It belongs to the prefoldin alpha subunit family. Heterohexamer of two alpha and four beta subunits.

The protein localises to the cytoplasm. In terms of biological role, molecular chaperone capable of stabilizing a range of proteins. Seems to fulfill an ATP-independent, HSP70-like function in archaeal de novo protein folding. This chain is Prefoldin subunit alpha, found in Nitrosopumilus maritimus (strain SCM1).